The following is a 224-amino-acid chain: Putative adhesin A1C_06425 (224 aa).

The first 22 residues, 1-22, serve as a signal peptide directing secretion; sequence MKKLLLIATTSATILSSSISFA.

This Rickettsia akari (strain Hartford) protein is Putative adhesin A1C_06425.